A 210-amino-acid chain; its full sequence is C4-dicarboxylate TRAP transporter small permease protein DctQ (210 aa).

Helical transmembrane passes span 13–33, 77–97, 113–133, and 160–180; these read EGLIAFLLAAMTLVTFVYVVL, ALFAWLIFLGIAYGVRTAGHL, VLGVIACLACLGYAGLLCVAS, and IGLIVPVGFALVFIRFAEILV.

It belongs to the TRAP transporter small permease family. As to quaternary structure, the complex comprises the extracytoplasmic solute receptor protein DctP, and the two transmembrane proteins DctQ and DctM.

It is found in the cell inner membrane. In terms of biological role, part of the tripartite ATP-independent periplasmic (TRAP) transport system DctPQM involved in C4-dicarboxylates uptake. This Pseudomonas aeruginosa (strain ATCC 15692 / DSM 22644 / CIP 104116 / JCM 14847 / LMG 12228 / 1C / PRS 101 / PAO1) protein is C4-dicarboxylate TRAP transporter small permease protein DctQ.